The primary structure comprises 314 residues: Malate dehydrogenase (314 aa).

NAD(+) is bound by residues Gly11–Gly16 and Asp35. Substrate contacts are provided by Arg84 and Arg90. Residues Asn97 and Ile120 to Asn122 each bind NAD(+). Substrate contacts are provided by Asn122 and Arg153. His177 (proton acceptor) is an active-site residue.

The protein belongs to the LDH/MDH superfamily. MDH type 3 family.

The catalysed reaction is (S)-malate + NAD(+) = oxaloacetate + NADH + H(+). In terms of biological role, catalyzes the reversible oxidation of malate to oxaloacetate. The sequence is that of Malate dehydrogenase from Rickettsia africae (strain ESF-5).